Here is a 327-residue protein sequence, read N- to C-terminus: MLKKCLPLLLLCTAPVFAKPVLTVYTYDSFAADWGPGPVVKKAFEADCNCELKLVALEDGVSLLNRLRMEGKNSKADVVLGLDNNLLDAASKTGLFAKSGVAADAVNVPGGWNNDTFVPFDYGYFAFVYDKNKLKNPPQSLKELVESDQNWRVIYQDPRTSTPGLGLLLWMQKVYGDDAPQAWQKLAKKTVTVTKGWSEAYGLFLKGESDLVLSYTTSPAYHILEEKKDNYAAANFSEGHYLQVEVAARTAASKQPELAQKFLQFMVSPAFQNAIPTGNWMYPVANVTLPAGFEKLTKPATTLEFTPAEVAAQRQAWISEWQRAVSR.

The signal sequence occupies residues 1-18; it reads MLKKCLPLLLLCTAPVFA. Residues 59-60, 161-162, Trp-197, and 215-218 contribute to the thiamine site; these read DG, ST, and YTTS.

The protein belongs to the bacterial solute-binding protein 1 family. As to quaternary structure, monomer in solution. The complex is composed of two ATP-binding proteins (ThiQ), two transmembrane proteins (ThiP) and a solute-binding protein (ThiB).

It is found in the periplasm. Its activity is regulated as follows. Transport is inhibited by the sulfhydryl-specific modifier N-ethylmaleimide. Part of the ABC transporter complex ThiBPQ involved in thiamine import. Binds thiamine, thiamine phosphate and thiamine diphosphate with high affinity. This is Thiamine-binding periplasmic protein (thiB) from Escherichia coli (strain K12).